A 232-amino-acid chain; its full sequence is GTP cyclohydrolase III (232 aa).

This sequence belongs to the archaeal-type GTP cyclohydrolase family.

It carries out the reaction GTP + 3 H2O = 2-amino-5-formylamino-6-(5-phospho-D-ribosylamino)pyrimidin-4(3H)-one + 2 phosphate + 2 H(+). Functionally, catalyzes the formation of 2-amino-5-formylamino-6-ribofuranosylamino-4(3H)-pyrimidinone ribonucleotide monophosphate and inorganic phosphate from GTP. Also has an independent pyrophosphate phosphohydrolase activity. The sequence is that of GTP cyclohydrolase III from Saccharolobus islandicus (strain Y.N.15.51 / Yellowstone #2) (Sulfolobus islandicus).